A 244-amino-acid chain; its full sequence is Transcriptional activator protein Anr (244 aa).

21-149 (APLCLPLSLN…RVMSREIRDD (129 aa)) contacts a nucleoside 3',5'-cyclic phosphate. The region spanning 159 to 232 (KTADERIATF…GKEVHILDPI (74 aa)) is the HTH crp-type domain. Residues 192–211 (RNEIGNYLGLAVETVSRVFT) constitute a DNA-binding region (H-T-H motif).

Transcriptional activator of anaerobic gene expression. Regulates the expression of the components of the hydrogen cyanide synthase (HcnABC) in a positive manner. May also act as an iron sensor. The chain is Transcriptional activator protein Anr from Pseudomonas protegens (strain DSM 19095 / LMG 27888 / CFBP 6595 / CHA0).